Here is a 160-residue protein sequence, read N- to C-terminus: 2-C-methyl-D-erythritol 2,4-cyclodiphosphate synthase (160 aa).

A divalent metal cation contacts are provided by aspartate 10 and histidine 12. Residues 10-12 and 36-37 contribute to the 4-CDP-2-C-methyl-D-erythritol 2-phosphate site; these read DVH and HS. Histidine 44 is an a divalent metal cation binding site. Residues 58-60, 63-67, 102-108, 134-137, phenylalanine 141, and arginine 144 contribute to the 4-CDP-2-C-methyl-D-erythritol 2-phosphate site; these read DIG, FPDTD, AQAPKML, and TTTE.

It belongs to the IspF family. As to quaternary structure, homotrimer. The cofactor is a divalent metal cation.

The enzyme catalyses 4-CDP-2-C-methyl-D-erythritol 2-phosphate = 2-C-methyl-D-erythritol 2,4-cyclic diphosphate + CMP. It functions in the pathway isoprenoid biosynthesis; isopentenyl diphosphate biosynthesis via DXP pathway; isopentenyl diphosphate from 1-deoxy-D-xylulose 5-phosphate: step 4/6. Involved in the biosynthesis of isopentenyl diphosphate (IPP) and dimethylallyl diphosphate (DMAPP), two major building blocks of isoprenoid compounds. Catalyzes the conversion of 4-diphosphocytidyl-2-C-methyl-D-erythritol 2-phosphate (CDP-ME2P) to 2-C-methyl-D-erythritol 2,4-cyclodiphosphate (ME-CPP) with a corresponding release of cytidine 5-monophosphate (CMP). This Shewanella amazonensis (strain ATCC BAA-1098 / SB2B) protein is 2-C-methyl-D-erythritol 2,4-cyclodiphosphate synthase.